A 480-amino-acid chain; its full sequence is Na(+)/H(+) antiporter NhaA (480 aa).

11 helical membrane passes run 34–54 (VGGVLLLVATVTALVWANIPA), 76–96 (LSVAHWAADGLLAVFFFVAGI), 113–133 (AVLPVVAALCGMAVPALVYTL), 144–164 (GWAVPTATDIAFALAVLAVIG), 174–194 (FLLTLAVVDDLFAILIIAIFF), 197–217 (RINFAALGGAVAGLAVFWLLL), 223–243 (GWYVYVPLAVVVWALMYNSGV), 282–302 (GLAVPLFALFSAGVVVSGGAL), 312–332 (LGVVLGLVVGKTLGIFGSTWL), 350–370 (IFAVASLAGIGFTVSLLIGEL), and 381–401 (EVKAAVLTGSLIAALCATVLL). Residues 454 to 480 (AAEKAAAARHGGAEVPGGAGEEDGRPA) form a disordered region.

The protein belongs to the NhaA Na(+)/H(+) (TC 2.A.33) antiporter family.

It is found in the cell membrane. It carries out the reaction Na(+)(in) + 2 H(+)(out) = Na(+)(out) + 2 H(+)(in). In terms of biological role, na(+)/H(+) antiporter that extrudes sodium in exchange for external protons. In Streptomyces antibioticus, this protein is Na(+)/H(+) antiporter NhaA.